A 277-amino-acid polypeptide reads, in one-letter code: 4-hydroxy-tetrahydrodipicolinate reductase (277 aa).

NAD(+) is bound by residues 10-15 (GAGGRM) and E36. An NADP(+)-binding site is contributed by R37. NAD(+)-binding positions include 100–102 (GTT) and 124–127 (SGNM). Catalysis depends on H158, which acts as the Proton donor/acceptor. A (S)-2,3,4,5-tetrahydrodipicolinate-binding site is contributed by H159. K162 functions as the Proton donor in the catalytic mechanism. (S)-2,3,4,5-tetrahydrodipicolinate is bound at residue 168 to 169 (GT).

It belongs to the DapB family.

Its subcellular location is the cytoplasm. It carries out the reaction (S)-2,3,4,5-tetrahydrodipicolinate + NAD(+) + H2O = (2S,4S)-4-hydroxy-2,3,4,5-tetrahydrodipicolinate + NADH + H(+). The catalysed reaction is (S)-2,3,4,5-tetrahydrodipicolinate + NADP(+) + H2O = (2S,4S)-4-hydroxy-2,3,4,5-tetrahydrodipicolinate + NADPH + H(+). It participates in amino-acid biosynthesis; L-lysine biosynthesis via DAP pathway; (S)-tetrahydrodipicolinate from L-aspartate: step 4/4. In terms of biological role, catalyzes the conversion of 4-hydroxy-tetrahydrodipicolinate (HTPA) to tetrahydrodipicolinate. The chain is 4-hydroxy-tetrahydrodipicolinate reductase from Chelativorans sp. (strain BNC1).